The sequence spans 666 residues: Zinc finger MYM-type protein 5 (666 aa).

Glycyl lysine isopeptide (Lys-Gly) (interchain with G-Cter in SUMO2) cross-links involve residues lysine 85, lysine 88, lysine 146, and lysine 163. The tract at residues 87–106 (EKPQGNYSVIPPPSRDLASQ) is disordered. Residues 191–212 (SPDSWISQSASFPRNQKQPGVD) form a disordered region. Positions 194–208 (SWISQSASFPRNQKQ) are enriched in polar residues. A Glycyl lysine isopeptide (Lys-Gly) (interchain with G-Cter in SUMO2) cross-link involves residue lysine 222. MYM-type zinc fingers lie at residues 262-296 (HLFC…KKAD), 308-348 (QEFC…RHEV), 355-390 (HKLC…KSTG), and 401-428 (KRFC…ASEN). Residues lysine 440, lysine 452, lysine 459, and lysine 549 each participate in a glycyl lysine isopeptide (Lys-Gly) (interchain with G-Cter in SUMO2) cross-link.

As to quaternary structure, interacts (via N-terminal 120 amino acid region) with ETV5 (via C-terminal).

The protein resides in the nucleus. Its function is as follows. Functions as a transcriptional regulator. The chain is Zinc finger MYM-type protein 5 (ZMYM5) from Macaca fascicularis (Crab-eating macaque).